The sequence spans 321 residues: Thioredoxin reductase tcpT (321 aa).

Residues 14–17 (GGPA), 36–41 (DSGRYR), histidine 49, and alanine 114 each bind FAD. A disulfide bond links cysteine 138 and cysteine 141. Residues aspartate 282 and 289–290 (NV) contribute to the FAD site.

It belongs to the class-II pyridine nucleotide-disulfide oxidoreductase family. In terms of assembly, homodimer. It depends on FAD as a cofactor.

It functions in the pathway secondary metabolite biosynthesis. Thioredoxin reductase; part of the gene cluster that mediates the biosynthesis of an unusual class of epipolythiodioxopiperazines (ETPs) lacking the reactive thiol group important for toxicity. Firstly, L-tyrosine is prenylated by tcpD, before undergoing condensation with L-glycine in a reaction catalyzed by the NRPS tcpP leading to the diketopiperazine (DKP) backbone. Afterwards the alpha-carbon of tyrosine is oxidized by the cytochrome P450 tcpC to form a hydroxyl group. However, in contrast other ETP biosynthesis pathways studied so far, tcpC is not able to bishydroxylate the DKP at both alpha-carbon positions, but hydroxylates the alpha-carbon of the tyrosine part and the nitrogen of the glycine part. The next steps involve an alpha,beta-elimination reaction catalyzed by tcpI, a methylation by the methyltransferase tcpN the action of the four enzyme cascade tcpG/K/J/I. Due to a dysfunctional cytochrome P450 monooxygenase tcpC, the pathway leads to the biosynthesis of probable non-toxic metabolites lacking the reactive thiol group. In Claviceps purpurea (strain 20.1) (Ergot fungus), this protein is Thioredoxin reductase tcpT.